The chain runs to 458 residues: Mitochondrial-processing peptidase subunit beta (458 aa).

The N-terminal 41 residues, 1–41, are a transit peptide targeting the mitochondrion; it reads MYRRLASGLYQTSQRRIAQVQPKSVFVPETIVTTLPNGFRV. A Zn(2+)-binding site is contributed by His-73. Glu-76 acts as the Proton acceptor in catalysis. Residues His-77 and Glu-153 each coordinate Zn(2+).

It belongs to the peptidase M16 family. In terms of assembly, heterodimer of mppa-1 (alpha) and mppb-1 (beta) subunits, forming the mitochondrial processing protease (MPP) in which mppa-1 is involved in substrate recognition and binding and mppb-1 is the catalytic subunit. Zn(2+) is required as a cofactor.

Its subcellular location is the mitochondrion matrix. It carries out the reaction Release of N-terminal transit peptides from precursor proteins imported into the mitochondrion, typically with Arg in position P2.. With respect to regulation, binding to mppa-1 is required for catalytic activity. Inhibited by metal chelator ethylenediaminetetraacetic acid (EDTA). Catalytic subunit of the essential mitochondrial processing protease (MPP), which cleaves the mitochondrial sequence off newly imported precursors proteins. Preferentially, cleaves after an arginine at position P2. The chain is Mitochondrial-processing peptidase subunit beta from Caenorhabditis elegans.